Reading from the N-terminus, the 154-residue chain is 6,7-dimethyl-8-ribityllumazine synthase (154 aa).

5-amino-6-(D-ribitylamino)uracil-binding positions include F22, 56-58, and 80-82; these read AFE and AVI. 85-86 serves as a coordination point for (2S)-2-hydroxy-3-oxobutyl phosphate; that stretch reads AT. The active-site Proton donor is the H88. F113 contacts 5-amino-6-(D-ribitylamino)uracil. (2S)-2-hydroxy-3-oxobutyl phosphate is bound at residue R127.

It belongs to the DMRL synthase family. As to quaternary structure, forms an icosahedral capsid composed of 60 subunits, arranged as a dodecamer of pentamers.

It catalyses the reaction (2S)-2-hydroxy-3-oxobutyl phosphate + 5-amino-6-(D-ribitylamino)uracil = 6,7-dimethyl-8-(1-D-ribityl)lumazine + phosphate + 2 H2O + H(+). Its pathway is cofactor biosynthesis; riboflavin biosynthesis; riboflavin from 2-hydroxy-3-oxobutyl phosphate and 5-amino-6-(D-ribitylamino)uracil: step 1/2. In terms of biological role, catalyzes the formation of 6,7-dimethyl-8-ribityllumazine by condensation of 5-amino-6-(D-ribitylamino)uracil with 3,4-dihydroxy-2-butanone 4-phosphate. This is the penultimate step in the biosynthesis of riboflavin. This is 6,7-dimethyl-8-ribityllumazine synthase from Geobacillus kaustophilus (strain HTA426).